Reading from the N-terminus, the 160-residue chain is Non-secretory ribonuclease (160 aa).

The N-terminal stretch at 1-27 is a signal peptide; sequence MVPKLFTSPICLLLLLGLMGVEGSLHA. C-linked (Man) tryptophan glycosylation occurs at Trp34. Residue His42 is the Proton acceptor of the active site. N-linked (GlcNAc...) asparagine glycosylation occurs at Asn44. Disulfide bonds link Cys50/Cys110, Cys64/Cys122, Cys82/Cys137, and Cys89/Cys98. 3'-nitrotyrosine is present on Tyr60. Substrate is bound at residue 65–69; it reads KNQNT. N-linked (GlcNAc...) asparagine glycans are attached at residues Asn92, Asn111, and Asn138. Catalysis depends on His155, which acts as the Proton donor.

This sequence belongs to the pancreatic ribonuclease family. In terms of assembly, interacts with and forms a tight 1:1 complex with RNH1. Dimerization of two such complexes may occur.

The protein localises to the lysosome. It localises to the cytoplasmic granule. It carries out the reaction an [RNA] containing cytidine + H2O = an [RNA]-3'-cytidine-3'-phosphate + a 5'-hydroxy-ribonucleotide-3'-[RNA].. It catalyses the reaction an [RNA] containing uridine + H2O = an [RNA]-3'-uridine-3'-phosphate + a 5'-hydroxy-ribonucleotide-3'-[RNA].. Its function is as follows. This is a non-secretory ribonuclease. It is a pyrimidine specific nuclease with a slight preference for U. Cytotoxin and helminthotoxin. Possesses a wide variety of biological activities. The protein is Non-secretory ribonuclease (RNASE2) of Papio hamadryas (Hamadryas baboon).